A 295-amino-acid chain; its full sequence is 4-hydroxy-tetrahydrodipicolinate synthase (295 aa).

Thr-47 lines the pyruvate pocket. Tyr-135 serves as the catalytic Proton donor/acceptor. Lys-163 (schiff-base intermediate with substrate) is an active-site residue. Residue Ile-204 coordinates pyruvate.

It belongs to the DapA family. As to quaternary structure, homotetramer; dimer of dimers.

It is found in the cytoplasm. The enzyme catalyses L-aspartate 4-semialdehyde + pyruvate = (2S,4S)-4-hydroxy-2,3,4,5-tetrahydrodipicolinate + H2O + H(+). Its pathway is amino-acid biosynthesis; L-lysine biosynthesis via DAP pathway; (S)-tetrahydrodipicolinate from L-aspartate: step 3/4. Catalyzes the condensation of (S)-aspartate-beta-semialdehyde [(S)-ASA] and pyruvate to 4-hydroxy-tetrahydrodipicolinate (HTPA). The chain is 4-hydroxy-tetrahydrodipicolinate synthase from Caldicellulosiruptor saccharolyticus (strain ATCC 43494 / DSM 8903 / Tp8T 6331).